Consider the following 378-residue polypeptide: DNA replication and repair protein RecF (378 aa).

31 to 38 (GENGSGKT) serves as a coordination point for ATP.

The protein belongs to the RecF family.

Its subcellular location is the cytoplasm. The RecF protein is involved in DNA metabolism; it is required for DNA replication and normal SOS inducibility. RecF binds preferentially to single-stranded, linear DNA. It also seems to bind ATP. The sequence is that of DNA replication and repair protein RecF from Teredinibacter turnerae (strain ATCC 39867 / T7901).